The primary structure comprises 168 residues: DOMON domain-containing protein Y73F4A.2 (168 aa).

The N-terminal stretch at 1 to 18 (MFRSIAVLSALLFAFASA) is a signal peptide. The DOMON domain occupies 26-143 (SDFEVYWRFA…CQKWRFVKSG (118 aa)). The N-linked (GlcNAc...) asparagine glycan is linked to Asn36. The interval 148-168 (GQLTRNDKSPKEKKVCPMECN) is disordered. Residues 152-168 (RNDKSPKEKKVCPMECN) are compositionally biased toward basic and acidic residues.

It localises to the secreted. This Caenorhabditis elegans protein is DOMON domain-containing protein Y73F4A.2.